A 140-amino-acid chain; its full sequence is Seminal plasma protein A3 (140 aa).

Positions 1–25 (MALRLGLFLIWAGVSMFLQLDPVNG) are cleaved as a signal peptide. Fibronectin type-II domains follow at residues 49–93 (TKDN…YCTK) and 94–140 (NDYA…WKYC). 4 cysteine pairs are disulfide-bonded: cysteine 54–cysteine 78, cysteine 68–cysteine 91, cysteine 99–cysteine 125, and cysteine 113–cysteine 140.

It belongs to the seminal plasma protein family.

It localises to the secreted. Functionally, the BSP-A proteins from seminal plasma exhibit both simulatory and inhibitory actions on the release of pituitary gonadotropins. The exact function of these proteins is not known. This chain is Seminal plasma protein A3, found in Bos taurus (Bovine).